A 215-amino-acid polypeptide reads, in one-letter code: Ribose-5-phosphate isomerase A (215 aa).

Substrate-binding positions include 26–29 (TGST), 79–82 (DGAD), and 92–95 (KGGG). Glu101 serves as the catalytic Proton acceptor. Residue Lys119 coordinates substrate.

It belongs to the ribose 5-phosphate isomerase family. As to quaternary structure, homodimer.

The catalysed reaction is aldehydo-D-ribose 5-phosphate = D-ribulose 5-phosphate. It participates in carbohydrate degradation; pentose phosphate pathway; D-ribose 5-phosphate from D-ribulose 5-phosphate (non-oxidative stage): step 1/1. Catalyzes the reversible conversion of ribose-5-phosphate to ribulose 5-phosphate. The protein is Ribose-5-phosphate isomerase A of Xanthomonas campestris pv. campestris (strain 8004).